A 535-amino-acid polypeptide reads, in one-letter code: Arginine-containing cyclodipeptide synthase anoA (535 aa).

Residues 93-114 (LLSPPREPGPIDSETKTREKKS) form a disordered region. The span at 105–114 (SETKTREKKS) shows a compositional bias: basic and acidic residues. The Conserved DDXXE motif signature appears at 424–428 (DDIAE).

This sequence belongs to the arginine-containing cyclodipeptide synthase family.

It catalyses the reaction L-tryptophyl-tRNA(Trp) + L-arginyl-tRNA(Arg) = cyclo(L-arginyl-L-tryptophyl) + tRNA(Trp) + tRNA(Arg) + H(+). It participates in secondary metabolite biosynthesis. Its function is as follows. Arginine-containing cyclodipeptide synthase; part of the cluster that mediates the biosynthesis of a highly modified cyclo-arginine-tryptophan dipeptide (cRW). Within the pathway, AnoA acts as the scaffold-generating enzyme and is responsible for formation of the cyclo-Arg-Trp diketopiperazine (cRW) from L-arginyl-tRNA(Arg) + L-tryptophanyl-tRNA(Trp). Additional enzymes from the cluster then further modify the cyclo-Arg-Asp diketopiperazine (cRW) scaffold. This chain is Arginine-containing cyclodipeptide synthase anoA, found in Aspergillus nomiae (Aspergillus nomius).